The primary structure comprises 420 residues: Mitochondrial chaperone BCS1 (420 aa).

Topologically, residues 1-15 (MTLSDFIGALKDNPY) are mitochondrial intermembrane. The helical transmembrane segment at 16–32 (FGAGFGLVGVGTALAVA) threads the bilayer. Residues 33 to 420 (RKGAQVGMIF…AIKNIAEIKD (388 aa)) are Mitochondrial matrix-facing. An ATP-binding site is contributed by 230–237 (GPPGCGKS).

It belongs to the AAA ATPase family. BCS1 subfamily.

The protein localises to the mitochondrion inner membrane. The enzyme catalyses ATP + H2O = ADP + phosphate + H(+). Chaperone necessary for the incorporation of Rieske iron-sulfur protein uqcrfs1 into the mitochondrial respiratory chain complex III. This is Mitochondrial chaperone BCS1 (bcs1l) from Danio rerio (Zebrafish).